The following is a 184-amino-acid chain: Large ribosomal subunit protein uL5 (184 aa).

This sequence belongs to the universal ribosomal protein uL5 family. In terms of assembly, part of the 50S ribosomal subunit; part of the 5S rRNA/L5/L18/L25 subcomplex. Contacts the 5S rRNA and the P site tRNA. Forms a bridge to the 30S subunit in the 70S ribosome.

Its function is as follows. This is one of the proteins that bind and probably mediate the attachment of the 5S RNA into the large ribosomal subunit, where it forms part of the central protuberance. In the 70S ribosome it contacts protein S13 of the 30S subunit (bridge B1b), connecting the 2 subunits; this bridge is implicated in subunit movement. Contacts the P site tRNA; the 5S rRNA and some of its associated proteins might help stabilize positioning of ribosome-bound tRNAs. The sequence is that of Large ribosomal subunit protein uL5 from Ureaplasma urealyticum serovar 10 (strain ATCC 33699 / Western).